The sequence spans 519 residues: Acetylcholine receptor subunit beta-like 2 (519 aa).

The first 18 residues, methionine 1 to serine 18, serve as a signal peptide directing secretion. The Extracellular portion of the chain corresponds to threonine 19–lysine 244. Asparagine 50 carries an N-linked (GlcNAc...) asparagine glycan. A disulfide bridge connects residues cysteine 154 and cysteine 168. A run of 3 helical transmembrane segments spans residues threonine 245–leucine 269, valine 277–alanine 295, and tyrosine 311–isoleucine 332. The Cytoplasmic segment spans residues histidine 333–arginine 462. The chain crosses the membrane as a helical span at residues phenylalanine 463–cysteine 481.

Belongs to the ligand-gated ion channel (TC 1.A.9) family. Acetylcholine receptor (TC 1.A.9.1) subfamily. In terms of tissue distribution, CNS in embryos.

It is found in the postsynaptic cell membrane. It localises to the cell membrane. Functionally, after binding acetylcholine, the AChR responds by an extensive change in conformation that affects all subunits and leads to opening of an ion-conducting channel across the plasma membrane. This Drosophila melanogaster (Fruit fly) protein is Acetylcholine receptor subunit beta-like 2 (nAChRbeta2).